The sequence spans 359 residues: uncharacterized protein (359 aa).

It belongs to the glycosyltransferase group 1 family. Glycosyltransferase 4 subfamily.

This is an uncharacterized protein from Bacillus subtilis (strain 168).